The primary structure comprises 833 residues: pre-rRNA 2'-O-ribose RNA methyltransferase (833 aa).

Residues G57, W59, D77, D93, and D118 each contribute to the S-adenosyl-L-methionine site. K158 serves as the catalytic Proton acceptor. 5 disordered regions span residues 323–349 (KLDNPDEEETEKPEEKKELTAEEMEEN), 363–453 (KKKR…DEYL), 475–640 (LDDV…SDED), 730–767 (LGKKMEKTRDKASSIVDNPEMSNREKSKAIEKLYSGTD), and 779–833 (IAKK…KNKK). Residues 336–386 (EEKKELTAEEMEENLQEEMKEYLALVEKKKRKEKKRQNELKRKHQRKIELT) are a coiled coil. Residues 363–381 (KKKRKEKKRQNELKRKHQR) are compositionally biased toward basic residues. The segment covering 382-396 (KIELTMHIPGDKIEE) has biased composition (basic and acidic residues). The span at 423-441 (SSDEFDSDDSDDDDDDDNN) shows a compositional bias: acidic residues. Residues 455-485 (QQLDEQYKLYQQRIRKKAAKLDDVKVKKDKI) are a coiled coil. Residues 475-486 (LDDVKVKKDKIG) show a composition bias toward basic and acidic residues. Acidic residues-rich tracts occupy residues 490–503 (YNEDDEEFVEEQEE) and 542–556 (SESEPEQDGDDDQDD). The span at 557 to 566 (ENNKPIDISK) shows a compositional bias: basic and acidic residues. Acidic residues-rich tracts occupy residues 605 to 614 (DKDDQDDDDD) and 626 to 640 (PVQEEVEYESDSDED). Composition is skewed to basic and acidic residues over residues 732–741 (KKMEKTRDKA), 751–767 (SNREKSKAIEKLYSGTD), and 794–806 (KIVDKRMKKDLRA).

This sequence belongs to the class I-like SAM-binding methyltransferase superfamily. RNA methyltransferase RlmE family. SPB1 subfamily.

The protein localises to the nucleus. Its subcellular location is the nucleolus. It carries out the reaction a ribonucleotide in rRNA + S-adenosyl-L-methionine = a 2'-O-methylribonucleotide in rRNA + S-adenosyl-L-homocysteine + H(+). RNA 2'-O-methyltransferase involved in the maturation of rRNA and in the biogenesis of ribosomal subunits. The protein is pre-rRNA 2'-O-ribose RNA methyltransferase (fsjC) of Dictyostelium discoideum (Social amoeba).